A 118-amino-acid polypeptide reads, in one-letter code: MFARLSTALLAFTLATAVVAAPGGRPSEVEYEQCNGGEIQCCNSYQKADSLDYNTSKLLGLLNIDVKQITAGVGLTCTGINAVGIGGGSSCTQQKVCCTNNKFNGVVALGCSPINVSL.

The N-terminal stretch at Met-1–Ala-20 is a signal peptide. 4 cysteine pairs are disulfide-bonded: Cys-34–Cys-97, Cys-41–Cys-91, Cys-42–Cys-77, and Cys-98–Cys-111. N-linked (GlcNAc...) asparagine glycosylation occurs at Asn-54. An N-linked (GlcNAc...) asparagine glycan is attached at Asn-115.

This sequence belongs to the fungal hydrophobin family. Self-assembles to form functional amyloid fibrils called rodlets. Self-assembly into fibrillar rodlets occurs spontaneously at hydrophobic:hydrophilic interfaces and the rodlets further associate laterally to form amphipathic monolayers.

The protein resides in the secreted. It localises to the cell wall. In terms of biological role, aerial growth, conidiation, and dispersal of filamentous fungi in the environment rely upon a capability of their secreting small amphipathic proteins called hydrophobins (HPBs) with low sequence identity. Class I can self-assemble into an outermost layer of rodlet bundles on aerial cell surfaces, conferring cellular hydrophobicity that supports fungal growth, development and dispersal; whereas Class II form highly ordered films at water-air interfaces through intermolecular interactions but contribute nothing to the rodlet structure. This chain is Class I hydrophobin 1, found in Coprinopsis cinerea (strain Okayama-7 / 130 / ATCC MYA-4618 / FGSC 9003) (Inky cap fungus).